The sequence spans 705 residues: Solute carrier family 28 member 3 (705 aa).

Positions 1-21 (MSRSDPDPGKNSEPSKSKMSL) are enriched in basic and acidic residues. The disordered stretch occupies residues 1-96 (MSRSDPDPGK…TEEESEDERQ (96 aa)). Topologically, residues 1–119 (MSRSDPDPGK…FCRKHRVILQ (119 aa)) are cytoplasmic. The segment covering 48-63 (APGNSTVRSRVVQSGE) has biased composition (polar residues). Residues 65–74 (GRAKQDDRQI) are compositionally biased toward basic and acidic residues. A helical transmembrane segment spans residues 120–140 (HTIWAVLLTGFLALVIAACAL). Residues 141–145 (NFHRA) are Extracellular-facing. The helical transmembrane segment at 146-166 (LPLFVITLVTIFFVVWDRLMA) threads the bilayer. Residues 167–190 (KYEQRIDDVLSPGKRLLERHWFWL) are Cytoplasmic-facing. Residues 191–211 (KWVVWCSLILAVILWLALDTA) form a helical membrane-spanning segment. The Extracellular portion of the chain corresponds to 212–214 (RLG). The helical transmembrane segment at 215 to 236 (QQQLISFGGLVMYIVLLFLFSK) threads the bilayer. The Cytoplasmic portion of the chain corresponds to 237 to 244 (HPTRVYWR). A helical transmembrane segment spans residues 245-264 (PVFWGIGLQFLLGLLILRTR). At 265-301 (PGFVAFDWMGKQVQTFLGYTDAGAQFVFGEKYTDHFF) the chain is on the extracellular side. Residues 302–322 (AFKILPIVVFFSTVMSMLYYL) traverse the membrane as a helical segment. At 323-346 (GLMQWIIRKVGWLMLVTMGSSPIE) the chain is on the cytoplasmic side. An intramembrane region (helical) is located at residues 347-365 (SVVAAGNIFVGQTESPLLV). Residues 366–378 (QPYLPHVTKSELH) lie on the Cytoplasmic side of the membrane. The chain crosses the membrane as a helical span at residues 379-401 (TIMTAGFATIAGSVLGAYISFGV). Over 402 to 403 (SS) the chain is Extracellular. The chain crosses the membrane as a helical span at residues 404-425 (THLLTASVMSAPAALAVAKLFW). Topologically, residues 426–460 (PETEKPKITLKNAMKMENGDSRNLLEAATQGASSS) are cytoplasmic. The helical transmembrane segment at 461–486 (IPLVANIAANLIAFLALLSFVNSALS) threads the bilayer. Residues 487–524 (WFGSMFDYPQLSFELICSYIFMPFSFMMGVDWQDRFMV) lie on the Extracellular side of the membrane. Positions 525–544 (AKLIGYKTFFNEFVAYEHLS) form an intramembrane region, helical. Over 545 to 583 (KFINLRKAAGPKFVNGVQQYMSIRSETIATYALCGFANF) the chain is Extracellular. The chain crosses the membrane as a helical span at residues 584–594 (GSLGIVIGGLT). Over 595–607 (SIAPSRKRDIASG) the chain is Cytoplasmic. A helical membrane pass occupies residues 608 to 630 (AMRALIAGTIACFMTACIAGMLS). Topologically, residues 631–705 (DTPVAINCHH…LNCGWIPNIP (75 aa)) are extracellular.

Belongs to the concentrative nucleoside transporter (CNT) (TC 2.A.41) family. Homotrimer. In terms of tissue distribution, expressed in kidney; in the proximal tubule, glomerulus and cortical collecting duct.

It is found in the cell membrane. It catalyses the reaction thymidine(out) + 2 Na(+)(out) = thymidine(in) + 2 Na(+)(in). It carries out the reaction cytidine(out) + 2 Na(+)(out) = cytidine(in) + 2 Na(+)(in). The catalysed reaction is uridine(out) + 2 Na(+)(out) = uridine(in) + 2 Na(+)(in). The enzyme catalyses adenosine(out) + 2 Na(+)(out) = adenosine(in) + 2 Na(+)(in). It catalyses the reaction guanosine(out) + 2 Na(+)(out) = guanosine(in) + 2 Na(+)(in). It carries out the reaction inosine(out) + 2 Na(+)(out) = inosine(in) + 2 Na(+)(in). Functionally, sodium-dependent, pyrimidine- and purine-selective. Involved in the homeostasis of endogenous nucleosides. Exhibits the transport characteristics of the nucleoside transport system cib or N3 subtype (N3/cib) (with marked transport of both thymidine and inosine). Employs a 2:1 sodium/nucleoside ratio. Also able to transport gemcitabine, 3'-azido-3'-deoxythymidine (AZT), ribavirin and 3-deazauridine. This is Solute carrier family 28 member 3 (Slc28a3) from Rattus norvegicus (Rat).